The chain runs to 305 residues: Deoxyhypusine hydroxylase (305 aa).

HEAT-like PBS-type repeat units lie at residues 54-80 and 87-113; these read LKHE…VLKD and VRHE…YAED. His56, His89, and Glu90 together coordinate Fe cation. Positions 137–160 are disordered; sequence EQTKDGTDENPYCSVDPAPPAQRK. HEAT-like PBS-type repeat units follow at residues 178 to 204, 209 to 235, and 242 to 268; these read DRYR…GLQC, FRHE…ALEK, and VRHE…YRKD. Fe cation is bound by residues His211, His244, and Glu245.

It belongs to the deoxyhypusine hydroxylase family. The cofactor is Fe(2+).

It carries out the reaction [eIF5A protein]-deoxyhypusine + AH2 + O2 = [eIF5A protein]-hypusine + A + H2O. It functions in the pathway protein modification; eIF5A hypusination. Its function is as follows. Catalyzes the hydroxylation of the N(6)-(4-aminobutyl)-L-lysine intermediate produced by deoxyhypusine synthase/DHPS on a critical lysine of the eukaryotic translation initiation factor 5A/eIF-5A. This is the second step of the post-translational modification of that lysine into an unusual amino acid residue named hypusine. Hypusination is unique to mature eIF-5A factor and is essential for its function. The chain is Deoxyhypusine hydroxylase (dohh) from Danio rerio (Zebrafish).